A 227-amino-acid chain; its full sequence is Ribonuclease 3 (227 aa).

The region spanning 6-128 is the RNase III domain; that stretch reads ASDYQQRIGY…VIAAIYLDAD (123 aa). A Mg(2+)-binding site is contributed by glutamate 41. Aspartate 45 is an active-site residue. Residues aspartate 114 and glutamate 117 each contribute to the Mg(2+) site. Glutamate 117 is an active-site residue. Positions 155–225 constitute a DRBM domain; sequence DPKTRLQEWL…ASHAINQLDS (71 aa). A compositionally biased stretch (basic and acidic residues) spans 203 to 212; that stretch reads GEGSSRRLAE. Residues 203 to 227 are disordered; it reads GEGSSRRLAEQDAASHAINQLDSNK.

The protein belongs to the ribonuclease III family. Homodimer. Mg(2+) is required as a cofactor.

The protein resides in the cytoplasm. It catalyses the reaction Endonucleolytic cleavage to 5'-phosphomonoester.. In terms of biological role, digests double-stranded RNA. Involved in the processing of primary rRNA transcript to yield the immediate precursors to the large and small rRNAs (23S and 16S). Processes some mRNAs, and tRNAs when they are encoded in the rRNA operon. Processes pre-crRNA and tracrRNA of type II CRISPR loci if present in the organism. The protein is Ribonuclease 3 of Xylella fastidiosa (strain M12).